Here is a 119-residue protein sequence, read N- to C-terminus: Large ribosomal subunit protein bL20 (119 aa).

This sequence belongs to the bacterial ribosomal protein bL20 family.

Its function is as follows. Binds directly to 23S ribosomal RNA and is necessary for the in vitro assembly process of the 50S ribosomal subunit. It is not involved in the protein synthesizing functions of that subunit. The polypeptide is Large ribosomal subunit protein bL20 (Bacillus licheniformis (strain ATCC 14580 / DSM 13 / JCM 2505 / CCUG 7422 / NBRC 12200 / NCIMB 9375 / NCTC 10341 / NRRL NRS-1264 / Gibson 46)).